The sequence spans 198 residues: uncharacterized protein (198 aa).

Positions 166 to 198 (GYEPDEKARKKRERVKRSEVEDQLKINVKPTRR) are disordered.

This is an uncharacterized protein from Coxiella burnetii (strain RSA 493 / Nine Mile phase I).